Consider the following 125-residue polypeptide: Glycine cleavage system H protein (125 aa).

The Lipoyl-binding domain occupies 23-104; sequence VVYIGITDYA…PYENWILKVK (82 aa). K64 carries the N6-lipoyllysine modification.

The protein belongs to the GcvH family. In terms of assembly, the glycine cleavage system is composed of four proteins: P, T, L and H. (R)-lipoate is required as a cofactor.

Functionally, the glycine cleavage system catalyzes the degradation of glycine. The H protein shuttles the methylamine group of glycine from the P protein to the T protein. This chain is Glycine cleavage system H protein, found in Clostridioides difficile (strain 630) (Peptoclostridium difficile).